Consider the following 345-residue polypeptide: Trace amine-associated receptor 6 (345 aa).

The Extracellular portion of the chain corresponds to 1–32 (MSSNSSLLVAVQLCYANVNGSCVKIPFSPGSR). N4 and N19 each carry an N-linked (GlcNAc...) asparagine glycan. 2 disulfides stabilise this stretch: C22–C186 and C105–C190. A helical membrane pass occupies residues 33-53 (VILYIVFGFGAVLAVFGNLLV). The Cytoplasmic portion of the chain corresponds to 54–68 (MISILHFKQLHSPTN). Residues 69–89 (FLVASLACADFLVGVTVMPFS) form a helical membrane-spanning segment. The Extracellular portion of the chain corresponds to 90–107 (MVRTVESCWYFGRSFCTF). Residues 108 to 128 (HTCCDVAFCYSSLFHLCFISI) form a helical membrane-spanning segment. The Cytoplasmic portion of the chain corresponds to 129–147 (DRYIAVTDPLVYPTKFTVS). Residues 148 to 168 (VSGICISVSWILPLMYSGAVF) traverse the membrane as a helical segment. The Extracellular portion of the chain corresponds to 169–202 (YTGVYDDGLEELSDALNCIGGCQTVVNQNWVLTD). The helical transmembrane segment at 203–223 (FLSFFIPTFIMIILYGNIFLV) threads the bilayer. Residues 224 to 259 (ARRQAKKIENTGSKTESSSESYKARVARRERKAAKT) lie on the Cytoplasmic side of the membrane. Residues 260 to 276 (LGVTVVAFMISWLPYSI) traverse the membrane as a helical segment. The Extracellular segment spans residues 277–282 (DSLIDA). The chain crosses the membrane as a helical span at residues 283-302 (FMGFITPACIYEICCWCAYY). The Cytoplasmic portion of the chain corresponds to 303-345 (NSAMNPLIYALFYPWFRKAIKVIVTGQVLKNSSATMNLFSEHI).

It belongs to the G-protein coupled receptor 1 family. In terms of tissue distribution, expressed at low abundance in various brain tissues, as well as in fetal liver, but not in the cerebellum or placenta. In the brain, comparable levels of expression in basal ganglia, frontal cortex, substantia nigra, amygdala and hippocampus, highest expression in hippocampus and lowest expression in basal ganglia.

It is found in the cell membrane. Olfactory receptor specific for trace amines, such as beta-phenylethylamine (beta-PEA). Trace amine compounds are enriched in animal body fluids and act on trace amine-associated receptors (TAARs) to elicit both intraspecific and interspecific innate behaviors. Beta-PEA-binding causes a conformation change that triggers signaling via G(s)-class of G alpha proteins (GNAL or GNAS). The sequence is that of Trace amine-associated receptor 6 from Homo sapiens (Human).